A 177-amino-acid chain; its full sequence is Large ribosomal subunit protein uL6 (177 aa).

This sequence belongs to the universal ribosomal protein uL6 family. In terms of assembly, part of the 50S ribosomal subunit.

This protein binds to the 23S rRNA, and is important in its secondary structure. It is located near the subunit interface in the base of the L7/L12 stalk, and near the tRNA binding site of the peptidyltransferase center. In Acidovorax ebreus (strain TPSY) (Diaphorobacter sp. (strain TPSY)), this protein is Large ribosomal subunit protein uL6.